The primary structure comprises 85 residues: Small ribosomal subunit protein bS16 (85 aa).

It belongs to the bacterial ribosomal protein bS16 family.

In Pseudomonas savastanoi pv. phaseolicola (strain 1448A / Race 6) (Pseudomonas syringae pv. phaseolicola (strain 1448A / Race 6)), this protein is Small ribosomal subunit protein bS16.